A 3583-amino-acid chain; its full sequence is Surfactin synthase subunit 2 (3583 aa).

3 Carrier domains span residues 965 to 1039 (APKT…EENE), 2005 to 2080 (APET…EASA), and 3034 to 3108 (APTT…ERAE). S999, S2040, and S3069 each carry O-(pantetheine 4'-phosphoryl)serine.

This sequence belongs to the ATP-dependent AMP-binding enzyme family. It depends on pantetheine 4'-phosphate as a cofactor.

Its pathway is antibiotic biosynthesis; surfactin biosynthesis. This protein is a multifunctional enzyme able to activate and polymerize the amino acids Leu, Glu, Asp and Val. Activation sites for these AA consist of individual domains. The polypeptide is Surfactin synthase subunit 2 (srfAB) (Bacillus subtilis (strain 168)).